Consider the following 637-residue polypeptide: Chaperone protein HtpG (637 aa).

The tract at residues 1–345 is a; substrate-binding; the sequence is MSQQETHGFQ…SNDLPLNVSR (345 aa). The interval 346–562 is b; that stretch reads EILQDNHITK…EGEMSTQMIK (217 aa). The segment at 563–637 is c; sequence LMQAAGQPVP…MNQMLLANMK (75 aa).

Belongs to the heat shock protein 90 family. As to quaternary structure, homodimer.

The protein localises to the cytoplasm. Functionally, molecular chaperone. Has ATPase activity. This Shewanella putrefaciens (strain CN-32 / ATCC BAA-453) protein is Chaperone protein HtpG.